Consider the following 222-residue polypeptide: uncharacterized protein (222 aa).

A signal peptide (tat-type signal) is located at residues 1-27 (MSFTRRKFVLGMGTVIFFTGSASSLLA). 4Fe-4S ferredoxin-type domains are found at residues 37 to 67 (YAMI…AQGS), 83 to 114 (TQYH…RDEQ), and 115 to 144 (GIVR…LNPV). [4Fe-4S] cluster is bound by residues Cys-46, Cys-49, Cys-52, Cys-56, Cys-92, Cys-95, Cys-100, Cys-104, Cys-124, Cys-127, Cys-130, Cys-134, Cys-151, Cys-154, Cys-167, and Cys-171.

Exported by the Tat system. The position of the signal peptide cleavage has not been experimentally proven. Can also be exported by the Sec system.

This is an uncharacterized protein from Escherichia coli (strain K12).